A 577-amino-acid polypeptide reads, in one-letter code: Putative laccase-1 (577 aa).

An N-terminal signal peptide occupies residues 1-28; it reads MGTAKIPALLWFLLAGLVLALAVNPAHG. 2 Plastocyanin-like domains span residues 37–153 and 163–316; these read FITE…PKRG and KEIP…YTDS. N-linked (GlcNAc...) asparagine glycans are attached at residues N42 and N83. Positions 87 and 89 each coordinate Cu cation. N115 is a glycosylation site (N-linked (GlcNAc...) asparagine). The Cu cation site is built by H132 and H134. N-linked (GlcNAc...) asparagine glycosylation is found at N276, N304, N382, and N402. Residues 442–561 enclose the Plastocyanin-like 3 domain; the sequence is DINGGGPLLT…DTMFIVKDGK (120 aa). Cu cation contacts are provided by H478, H481, H483, H540, C541, H542, H546, and M551.

The protein belongs to the multicopper oxidase family. Cu cation is required as a cofactor.

Its subcellular location is the secreted. It is found in the extracellular space. The protein localises to the apoplast. The catalysed reaction is 4 hydroquinone + O2 = 4 benzosemiquinone + 2 H2O. In terms of biological role, lignin degradation and detoxification of lignin-derived products. In Oryza sativa subsp. japonica (Rice), this protein is Putative laccase-1 (LAC1).